A 355-amino-acid chain; its full sequence is MKRIVLTGGGTAGHVTPNIALIAGLKEQGYEIHYIGSYEGIERELIEKLGIPYHGISSGKLRRYLDIKNFSDPFKVLKGYREAKKLLKNLDPNVVFSKGGFVAVPVVLAAKKRKIPAIIHESDMTPGLANRLCIPSAAKVCANFPETLNYLPKEKAVLTGTPIRKELFSGNKIKGLDFCGFTANIPVLLIVGGSTGALKVNEAVRNLLPTLLKRFQVIHLCGKGKVDPSFNKHKGYVQYEYIGAELNHLFAAADIVISRAGANAICELLALRKPNILIPLSAAASRGDQILNAESFEHQGYSYVIKEEVLSNETLLQAVNHVFDNQKSYIEAMKNSNQNDAVDKIIGLIEEVRLK.

UDP-N-acetyl-alpha-D-glucosamine is bound by residues 11–13, arginine 164, serine 194, and glutamine 289; that span reads TAG.

Belongs to the glycosyltransferase 28 family. MurG subfamily.

It is found in the cell membrane. It carries out the reaction di-trans,octa-cis-undecaprenyl diphospho-N-acetyl-alpha-D-muramoyl-L-alanyl-D-glutamyl-meso-2,6-diaminopimeloyl-D-alanyl-D-alanine + UDP-N-acetyl-alpha-D-glucosamine = di-trans,octa-cis-undecaprenyl diphospho-[N-acetyl-alpha-D-glucosaminyl-(1-&gt;4)]-N-acetyl-alpha-D-muramoyl-L-alanyl-D-glutamyl-meso-2,6-diaminopimeloyl-D-alanyl-D-alanine + UDP + H(+). The protein operates within cell wall biogenesis; peptidoglycan biosynthesis. Cell wall formation. Catalyzes the transfer of a GlcNAc subunit on undecaprenyl-pyrophosphoryl-MurNAc-pentapeptide (lipid intermediate I) to form undecaprenyl-pyrophosphoryl-MurNAc-(pentapeptide)GlcNAc (lipid intermediate II). The polypeptide is UDP-N-acetylglucosamine--N-acetylmuramyl-(pentapeptide) pyrophosphoryl-undecaprenol N-acetylglucosamine transferase (Lachnoclostridium phytofermentans (strain ATCC 700394 / DSM 18823 / ISDg) (Clostridium phytofermentans)).